The primary structure comprises 207 residues: Superoxide dismutase [Mn] (207 aa).

The Mn(2+) site is built by histidine 28, histidine 76, aspartate 160, and histidine 164.

It belongs to the iron/manganese superoxide dismutase family. Requires Mn(2+) as cofactor.

The catalysed reaction is 2 superoxide + 2 H(+) = H2O2 + O2. Destroys superoxide anion radicals which are normally produced within the cells and which are toxic to biological systems. The sequence is that of Superoxide dismutase [Mn] (sodA) from Mycobacterium lepraemurium.